The primary structure comprises 106 residues: Putative double-stranded DNA mimic protein VCM66_1163 (106 aa).

Belongs to the putative dsDNA mimic protein family.

May act as a double-stranded DNA (dsDNA) mimic. Probably regulates the activity of a dsDNA-binding protein. This chain is Putative double-stranded DNA mimic protein VCM66_1163, found in Vibrio cholerae serotype O1 (strain M66-2).